Here is a 327-residue protein sequence, read N- to C-terminus: Undecaprenyl-phosphate 4-deoxy-4-formamido-L-arabinose transferase (327 aa).

Residues Met1–Leu235 are Cytoplasmic-facing. The chain crosses the membrane as a helical span at residues Leu236–Val256. Residues Leu257–Gly269 are Periplasmic-facing. The chain crosses the membrane as a helical span at residues Val270–Leu290. Residues Leu291 to Gln327 are Cytoplasmic-facing.

It belongs to the glycosyltransferase 2 family.

The protein localises to the cell inner membrane. It catalyses the reaction UDP-4-deoxy-4-formamido-beta-L-arabinose + di-trans,octa-cis-undecaprenyl phosphate = 4-deoxy-4-formamido-alpha-L-arabinopyranosyl di-trans,octa-cis-undecaprenyl phosphate + UDP. The protein operates within glycolipid biosynthesis; 4-amino-4-deoxy-alpha-L-arabinose undecaprenyl phosphate biosynthesis; 4-amino-4-deoxy-alpha-L-arabinose undecaprenyl phosphate from UDP-4-deoxy-4-formamido-beta-L-arabinose and undecaprenyl phosphate: step 1/2. It functions in the pathway bacterial outer membrane biogenesis; lipopolysaccharide biosynthesis. In terms of biological role, catalyzes the transfer of 4-deoxy-4-formamido-L-arabinose from UDP to undecaprenyl phosphate. The modified arabinose is attached to lipid A and is required for resistance to polymyxin and cationic antimicrobial peptides. This is Undecaprenyl-phosphate 4-deoxy-4-formamido-L-arabinose transferase from Salmonella newport (strain SL254).